A 344-amino-acid polypeptide reads, in one-letter code: D-beta-hydroxybutyrate dehydrogenase, mitochondrial (344 aa).

The transit peptide at 1–46 (MLTARLSRPLSQLPRKTLNFSDRENGTRGSLLLYSAPFVPVGRRTY) directs the protein to the mitochondrion. 59 to 83 (LITGCDSGFGFSLAKHLHSEGFLVF) is a binding site for NAD(+). N6-acetyllysine occurs at positions 73 and 97. Lys103 carries the N6-acetyllysine; alternate modification. Position 103 is an N6-succinyllysine; alternate (Lys103). The residue at position 177 (Lys177) is an N6-acetyllysine. Ser195 contacts substrate. The active-site Proton acceptor is Tyr208. At Lys212 the chain carries N6-acetyllysine. Ser219 carries O-linked (GlcNAc) serine glycosylation. Ser246 is modified (phosphoserine). Position 260 is an N6-acetyllysine; alternate (Lys260). Lys260 carries the N6-succinyllysine; alternate modification. Position 281 is an N6-acetyllysine (Lys281).

Belongs to the short-chain dehydrogenases/reductases (SDR) family. As to quaternary structure, homotetramer.

It localises to the mitochondrion inner membrane. The protein localises to the mitochondrion matrix. The catalysed reaction is (R)-3-hydroxybutanoate + NAD(+) = acetoacetate + NADH + H(+). Its activity is regulated as follows. Requires phosphatidylcholine as an allosteric activator for enzymatic activity. The polypeptide is D-beta-hydroxybutyrate dehydrogenase, mitochondrial (Bos taurus (Bovine)).